A 185-amino-acid polypeptide reads, in one-letter code: MHIIVGLGNPGKKYDATRHNIGFEAIDMLAKRNNIEVKKLKHKALCGEGTIGGNKVLLVKPQTFMNLSGQSLLDIVQFYKVDPKNIVVLYDDIDIPVGTLRIREKGSSGTHNGMKSIIYLLQTDQFPRIRIGVGKPQFGDLADYVLGRFPKEEIPTMLETLERASQAVETLVKDGIAVSMNRYNG.

Tyr-14 provides a ligand contact to tRNA. His-19 (proton acceptor) is an active-site residue. Positions 64, 66, and 112 each coordinate tRNA.

The protein belongs to the PTH family. As to quaternary structure, monomer.

The protein resides in the cytoplasm. The enzyme catalyses an N-acyl-L-alpha-aminoacyl-tRNA + H2O = an N-acyl-L-amino acid + a tRNA + H(+). Functionally, hydrolyzes ribosome-free peptidyl-tRNAs (with 1 or more amino acids incorporated), which drop off the ribosome during protein synthesis, or as a result of ribosome stalling. Catalyzes the release of premature peptidyl moieties from peptidyl-tRNA molecules trapped in stalled 50S ribosomal subunits, and thus maintains levels of free tRNAs and 50S ribosomes. The chain is Peptidyl-tRNA hydrolase from Alkaliphilus oremlandii (strain OhILAs) (Clostridium oremlandii (strain OhILAs)).